Consider the following 644-residue polypeptide: G-protein coupled receptor-associated protein LMBRD2 (644 aa).

The Extracellular portion of the chain corresponds to 1-4 (MGTV). Residues 5-27 (SLAVQLFIVFLLTSYLLNKYSTI) traverse the membrane as a helical segment. Residues 28-31 (RKQN) lie on the Cytoplasmic side of the membrane. Residues 32-52 (PIVTISTFIGWYFSLIIVFVL) traverse the membrane as a helical segment. Residues 53-102 (PLDVAITFFHKCENDRQRVLNTTSTPAPIVPECELPGGYVPDDVLFDLWR) lie on the Extracellular side of the membrane. The N-linked (GlcNAc...) asparagine glycan is linked to Asn73. Residues 103–123 (VVYWSAQILTWLILPLLQSYV) form a helical membrane-spanning segment. Residues 124–145 (TAGNFTIFGKIRAAVINNTVYY) lie on the Cytoplasmic side of the membrane. The helical transmembrane segment at 146 to 166 (AIYSLCFLAILIYAMFKGVSI) threads the bilayer. Over 167–172 (NIENLK) the chain is Extracellular. A helical transmembrane segment spans residues 173 to 193 (VILVSASNTWGLFLLVVLLGH). Topologically, residues 194–369 (GLVELPRSLW…RLQTPFCRVL (176 aa)) are cytoplasmic. Residues 216-245 (YFDIEKLASEKSEAEENVKEIYKKVRVLFN) are a coiled coil. Residues 370–390 (GVVTVFMTFFVLFSECTFFVV) form a helical membrane-spanning segment. At 391 to 412 (SYTVSPAAFVTEYASNRFHYKY) the chain is on the extracellular side. Residues 413–433 (TQFVAFGIIVYLITCAYFTIF) traverse the membrane as a helical segment. Over 434 to 453 (RLQIYKYYHLDPNGHTDENS) the chain is Cytoplasmic. A helical transmembrane segment spans residues 454 to 474 (ILFSAILLCRLTPPICLNFLG). Over 475–502 (MIHMDSHVSMAKSFGVETQFTKLMGHLD) the chain is Extracellular. A helical transmembrane segment spans residues 503-523 (VIPILAKGINIYLPICIILLC). At 524-644 (AIHYYRVGAY…PSSSGFFDDM (121 aa)) the chain is on the cytoplasmic side. Over residues 567 to 576 (SIKRSNERNQ) the composition is skewed to basic and acidic residues. The tract at residues 567-644 (SIKRSNERNQ…PSSSGFFDDM (78 aa)) is disordered. The span at 578–594 (NQSWTNTITSNTSTTSN) shows a compositional bias: low complexity. A compositionally biased stretch (polar residues) spans 621–644 (VSSTTRISLSPTEHPSSSGFFDDM).

This sequence belongs to the LIMR family.

It localises to the cell membrane. Its function is as follows. May associate with G-protein coupled receptors and regulate downstream signaling pathways. The protein is G-protein coupled receptor-associated protein LMBRD2 of Caenorhabditis briggsae.